Reading from the N-terminus, the 291-residue chain is Probable xyloglucan endotransglucosylase/hydrolase protein 16 (291 aa).

Residues M1–S24 form the signal peptide. In terms of domain architecture, GH16 spans G25–Y215. E101 functions as the Nucleophile in the catalytic mechanism. The active-site Proton donor is the E105. Residue E105 coordinates xyloglucan. N-linked (GlcNAc...) asparagine glycosylation occurs at N109. Xyloglucan-binding positions include H118–N120, N128–E130, D194–W195, and G199. Cystine bridges form between C223-C232 and C272-C286. R277 contacts xyloglucan.

This sequence belongs to the glycosyl hydrolase 16 family. XTH group 2 subfamily. In terms of processing, contains at least one intrachain disulfide bond essential for its enzymatic activity.

The protein resides in the secreted. It is found in the cell wall. Its subcellular location is the extracellular space. The protein localises to the apoplast. The enzyme catalyses breaks a beta-(1-&gt;4) bond in the backbone of a xyloglucan and transfers the xyloglucanyl segment on to O-4 of the non-reducing terminal glucose residue of an acceptor, which can be a xyloglucan or an oligosaccharide of xyloglucan.. Catalyzes xyloglucan endohydrolysis (XEH) and/or endotransglycosylation (XET). Cleaves and religates xyloglucan polymers, an essential constituent of the primary cell wall, and thereby participates in cell wall construction of growing tissues. This is Probable xyloglucan endotransglucosylase/hydrolase protein 16 (XTH16) from Arabidopsis thaliana (Mouse-ear cress).